Reading from the N-terminus, the 266-residue chain is MICOS complex subunit MIC27 (266 aa).

A mitochondrion-targeting transit peptide spans 1 to 27 (MAAIRMGKLTTMPAGLIYASVSVHAAK). The Mitochondrial intermembrane segment spans residues 28–110 (EEESKKQLVK…YVYMKNPPRD (83 aa)). Residues 111 to 129 (FLPKMGVITVSGLAGLVSA) traverse the membrane as a helical segment. The Mitochondrial matrix segment spans residues 130 to 137 (RKGSKFKK). The helical transmembrane segment at 138-155 (ITYPLGLATLGATVCYPV) threads the bilayer. Topologically, residues 156–266 (QSVIIAKVTA…NVTNSGVLRI (111 aa)) are mitochondrial intermembrane. Phosphoserine is present on serine 204.

The protein belongs to the apolipoprotein O/MICOS complex subunit Mic27 family. Component of the mitochondrial contact site and cristae organizing system (MICOS) complex, composed of at least MICOS10/MIC10, CHCHD3/MIC19, CHCHD6/MIC25, APOOL/MIC27, IMMT/MIC60, APOO/MIC23/MIC26 and MICOS13/MIC13. This complex was also known under the names MINOS or MitOS complex. The MICOS complex associates with mitochondrial outer membrane proteins SAMM50, MTX1 and MTX2 (together described as components of the mitochondrial outer membrane sorting assembly machinery (SAM) complex) and DNAJC11, mitochondrial inner membrane protein TMEM11 and with HSPA9. The MICOS and SAM complexes together with DNAJC11 are part of a large protein complex spanning both membranes termed the mitochondrial intermembrane space bridging (MIB) complex. Interacts with MICOS10/MIC10, IMMT/MIC60 and APOO/MIC23/MIC26.

It is found in the mitochondrion inner membrane. It localises to the mitochondrion. Component of the MICOS complex, a large protein complex of the mitochondrial inner membrane that plays crucial roles in the maintenance of crista junctions, inner membrane architecture, and formation of contact sites to the outer membrane. Specifically binds to cardiolipin (in vitro) but not to the precursor lipid phosphatidylglycerol. Plays a crucial role in crista junction formation and mitochondrial function. In Pongo abelii (Sumatran orangutan), this protein is MICOS complex subunit MIC27 (APOOL).